Reading from the N-terminus, the 280-residue chain is F420-dependent methylenetetrahydromethanopterin dehydrogenase (280 aa).

Belongs to the MTD family.

It catalyses the reaction 5,10-methylenetetrahydromethanopterin + oxidized coenzyme F420-(gamma-L-Glu)(n) + 2 H(+) = 5,10-methenyl-5,6,7,8-tetrahydromethanopterin + reduced coenzyme F420-(gamma-L-Glu)(n). Its pathway is one-carbon metabolism; methanogenesis from CO(2); 5,10-methylene-5,6,7,8-tetrahydromethanopterin from 5,10-methenyl-5,6,7,8-tetrahydromethanopterin (coenzyme F420 route): step 1/1. Its function is as follows. Catalyzes the reversible reduction of methenyl-H(4)MPT(+) to methylene-H(4)MPT. The protein is F420-dependent methylenetetrahydromethanopterin dehydrogenase of Methanosphaerula palustris (strain ATCC BAA-1556 / DSM 19958 / E1-9c).